The chain runs to 143 residues: MAPKKKVSALLKLQIQAGKANPAPPLGPALGSHGVNIMDFCKQYNAATQDKMGQVIPVEITVYEDRSFTFILKTPPAAALLKKAAGIQKGTENPLTHKVGSVTKAQVREIAEIKMADLSARDVEAGMKIIAGTARSMGITVTD.

It belongs to the universal ribosomal protein uL11 family. Part of the ribosomal stalk of the 50S ribosomal subunit. Interacts with L10 and the large rRNA to form the base of the stalk. L10 forms an elongated spine to which L12 dimers bind in a sequential fashion forming a multimeric L10(L12)X complex. Post-translationally, one or more lysine residues are methylated.

Functionally, forms part of the ribosomal stalk which helps the ribosome interact with GTP-bound translation factors. In Bifidobacterium adolescentis (strain ATCC 15703 / DSM 20083 / NCTC 11814 / E194a), this protein is Large ribosomal subunit protein uL11.